A 256-amino-acid polypeptide reads, in one-letter code: Type III pantothenate kinase (256 aa).

6 to 13 contacts ATP; sequence DVGNSHIY. Substrate contacts are provided by residues Tyr99 and 106–109; that span reads GADR. Asp108 acts as the Proton acceptor in catalysis. Asp129 is a binding site for K(+). Thr132 contacts ATP. Residue Thr184 participates in substrate binding.

It belongs to the type III pantothenate kinase family. As to quaternary structure, homodimer. Requires NH4(+) as cofactor. K(+) serves as cofactor.

It localises to the cytoplasm. The enzyme catalyses (R)-pantothenate + ATP = (R)-4'-phosphopantothenate + ADP + H(+). Its pathway is cofactor biosynthesis; coenzyme A biosynthesis; CoA from (R)-pantothenate: step 1/5. Catalyzes the phosphorylation of pantothenate (Pan), the first step in CoA biosynthesis. In Legionella pneumophila (strain Corby), this protein is Type III pantothenate kinase.